The following is a 427-amino-acid chain: Bifunctional enzyme MtnB/MtnX (427 aa).

The segment at 1–221 (MRKPLIICDF…LEETAEVKEW (221 aa)) is HK-MTPenyl-1-P phosphatase. The tract at residues 222-427 (MSEQKRQELA…KLKALQAYHV (206 aa)) is MTRu-1-P dehydratase. Zn(2+) contacts are provided by His-317 and His-319.

The protein in the N-terminal section; belongs to the HAD-like hydrolase superfamily. MtnX family. In the C-terminal section; belongs to the aldolase class II family. MtnB subfamily. In terms of assembly, homotetramer. Requires Zn(2+) as cofactor.

It catalyses the reaction 5-(methylsulfanyl)-D-ribulose 1-phosphate = 5-methylsulfanyl-2,3-dioxopentyl phosphate + H2O. The enzyme catalyses 2-hydroxy-5-methylsulfanyl-3-oxopent-1-enyl phosphate + H2O = 1,2-dihydroxy-5-(methylsulfanyl)pent-1-en-3-one + phosphate. The protein operates within amino-acid biosynthesis; L-methionine biosynthesis via salvage pathway; L-methionine from S-methyl-5-thio-alpha-D-ribose 1-phosphate: step 2/6. Its pathway is amino-acid biosynthesis; L-methionine biosynthesis via salvage pathway; L-methionine from S-methyl-5-thio-alpha-D-ribose 1-phosphate: step 4/6. Functionally, catalyzes the dehydration of methylthioribulose-1-phosphate (MTRu-1-P) into 2,3-diketo-5-methylthiopentyl-1-phosphate (DK-MTP-1-P). Its function is as follows. Dephosphorylates 2-hydroxy-3-keto-5-methylthiopentenyl-1-phosphate (HK-MTPenyl-1-P) yielding 1,2-dihydroxy-3-keto-5-methylthiopentene (DHK-MTPene). In Bacillus licheniformis (strain ATCC 14580 / DSM 13 / JCM 2505 / CCUG 7422 / NBRC 12200 / NCIMB 9375 / NCTC 10341 / NRRL NRS-1264 / Gibson 46), this protein is Bifunctional enzyme MtnB/MtnX (mtnB/mtnX).